The sequence spans 518 residues: Vesicular inhibitory amino acid transporter (518 aa).

At 1-125 (MATLIRSKLS…WNVTNAIQGM (125 aa)) the chain is on the cytoplasmic side. Residues 66 to 98 (EVPSGDPTAEGDSHYQRDGTGPPSSASKDEGLC) form a disordered region. The chain crosses the membrane as a helical span at residues 126–146 (FVLGLPYAILHGGYLGLFLII). The Lumenal, vesicle portion of the chain corresponds to 147 to 197 (FAAVVCCYTGKILIACLYEENEDGETVRVRDSYVDIANACCAPRFPKLGGR). A helical membrane pass occupies residues 198–218 (VVNVAQIIELVMTCILYVVVS). The Cytoplasmic segment spans residues 219–258 (GNLMYNSFPSLPISQKSWSIIATAMLLPCAFLKNLKAVSK). A helical membrane pass occupies residues 259–279 (FSLLCTLAHFVINVLVIAYCL). Topologically, residues 280-298 (SRARDWAWDKVKFYIDVKK) are lumenal, vesicle. A helical transmembrane segment spans residues 299–319 (FPISIGIIVFSYTSQIFLPSL). The Cytoplasmic portion of the chain corresponds to 320-334 (EGNMQSPKEFHCMMN). A helical membrane pass occupies residues 335-355 (WTHIAACILKGLFALVAYLTW). Residues 356 to 376 (ADETKEVITDNLPSTIRAVVN) are Lumenal, vesicle-facing. A helical transmembrane segment spans residues 377 to 397 (LFLVAKALLSYPLPFFAAVEV). The Cytoplasmic segment spans residues 398-431 (LEKSLFQEGARAFFPNCYGGDGRLKSWGLTLRCA). Residues 432–452 (LVVFTLLMAIYVPHFALLMGL) traverse the membrane as a helical segment. The Lumenal, vesicle segment spans residues 453–454 (TG). Residues 455–475 (SLTGAGLCFLLPSLFHLKLLW) traverse the membrane as a helical segment. The Cytoplasmic portion of the chain corresponds to 476–482 (RKLQWHQ). The chain crosses the membrane as a helical span at residues 483–503 (VFFDVSIFVIGSICSVSGFVH). Topologically, residues 504-518 (SLEGLIEAFRFNIED) are lumenal, vesicle.

Belongs to the amino acid/polyamine transporter 2 family.

The protein resides in the cytoplasmic vesicle membrane. The protein localises to the presynapse. It catalyses the reaction 4-aminobutanoate(out) + n H(+)(in) = 4-aminobutanoate(in) + n H(+)(out). The enzyme catalyses glycine(out) + n H(+)(in) = glycine(in) + n H(+)(out). The catalysed reaction is beta-alanine(out) + n H(+)(in) = beta-alanine(in) + n H(+)(out). Functionally, antiporter that exchanges vesicular protons for cytosolic 4-aminobutanoate or to a lesser extend glycine, thus allowing their secretion from nerve terminals. The transport is equally dependent on the chemical and electrical components of the proton gradient. May also transport beta-alanine. Acidification of GABAergic synaptic vesicles is a prerequisite for 4-aminobutanoate uptake. In Xenopus tropicalis (Western clawed frog), this protein is Vesicular inhibitory amino acid transporter.